A 111-amino-acid polypeptide reads, in one-letter code: Magnetosome protein MamF (111 aa).

Residues methionine 1 to arginine 17 lie on the Cytoplasmic side of the membrane. A helical membrane pass occupies residues serine 18 to serine 38. The Lumenal segment spans residues arginine 39–glutamine 50. The chain crosses the membrane as a helical span at residues glycine 51–glycine 71. Lysine 72 is a topological domain (cytoplasmic). A helical transmembrane segment spans residues tryptophan 73–valine 93. Residues alanine 94–isoleucine 111 are Lumenal-facing.

This sequence belongs to the magnetosome MamF/MmsF protein family. As to quaternary structure, may form homooligomers. Post-translationally, subject to cleavage or degradation; identified by N-terminal sequencing of proteins that are about 103, 92 and 15 kDa in size.

The protein localises to the magnetosome membrane. In terms of biological role, plays a role in regulating magnetite crystal size; partially redundant function with MmsF. In Magnetospirillum gryphiswaldense (strain DSM 6361 / JCM 21280 / NBRC 15271 / MSR-1), this protein is Magnetosome protein MamF.